Here is a 413-residue protein sequence, read N- to C-terminus: Serine hydroxymethyltransferase (413 aa).

(6S)-5,6,7,8-tetrahydrofolate-binding positions include Leu117 and 121–123 (GHL). Lys226 carries the post-translational modification N6-(pyridoxal phosphate)lysine. Residues Glu239 and 349–351 (SPF) each bind (6S)-5,6,7,8-tetrahydrofolate.

It belongs to the SHMT family. In terms of assembly, homodimer. Pyridoxal 5'-phosphate serves as cofactor.

It localises to the cytoplasm. The enzyme catalyses (6R)-5,10-methylene-5,6,7,8-tetrahydrofolate + glycine + H2O = (6S)-5,6,7,8-tetrahydrofolate + L-serine. The protein operates within one-carbon metabolism; tetrahydrofolate interconversion. It functions in the pathway amino-acid biosynthesis; glycine biosynthesis; glycine from L-serine: step 1/1. Its function is as follows. Catalyzes the reversible interconversion of serine and glycine with tetrahydrofolate (THF) serving as the one-carbon carrier. This reaction serves as the major source of one-carbon groups required for the biosynthesis of purines, thymidylate, methionine, and other important biomolecules. Also exhibits THF-independent aldolase activity toward beta-hydroxyamino acids, producing glycine and aldehydes, via a retro-aldol mechanism. This Bacillus cereus (strain G9842) protein is Serine hydroxymethyltransferase.